A 251-amino-acid chain; its full sequence is Ubiquinone/menaquinone biosynthesis C-methyltransferase UbiE (251 aa).

Residues threonine 74, aspartate 95, and 123–124 (NA) contribute to the S-adenosyl-L-methionine site.

The protein belongs to the class I-like SAM-binding methyltransferase superfamily. MenG/UbiE family.

The enzyme catalyses a 2-demethylmenaquinol + S-adenosyl-L-methionine = a menaquinol + S-adenosyl-L-homocysteine + H(+). It catalyses the reaction a 2-methoxy-6-(all-trans-polyprenyl)benzene-1,4-diol + S-adenosyl-L-methionine = a 5-methoxy-2-methyl-3-(all-trans-polyprenyl)benzene-1,4-diol + S-adenosyl-L-homocysteine + H(+). Its pathway is quinol/quinone metabolism; menaquinone biosynthesis; menaquinol from 1,4-dihydroxy-2-naphthoate: step 2/2. It participates in cofactor biosynthesis; ubiquinone biosynthesis. In terms of biological role, methyltransferase required for the conversion of demethylmenaquinol (DMKH2) to menaquinol (MKH2) and the conversion of 2-polyprenyl-6-methoxy-1,4-benzoquinol (DDMQH2) to 2-polyprenyl-3-methyl-6-methoxy-1,4-benzoquinol (DMQH2). The sequence is that of Ubiquinone/menaquinone biosynthesis C-methyltransferase UbiE from Marinomonas sp. (strain MWYL1).